The chain runs to 141 residues: Hemoglobin subunit alpha-D (141 aa).

Residues 1-141 (VLTHEDCELL…VGDMLAEKYR (141 aa)) form the Globin domain. Heme b-binding residues include H58 and H87.

It belongs to the globin family. In terms of assembly, there are three forms of hemoglobin in Sphenodon: A, A' and D. Hb A is a tetramer of two alpha-A and two beta-1, Hb A' is a tetramer of two alpha-a and two beta-2, Hb D is a tetramer of two alpha-D and two beta-2. In terms of tissue distribution, red blood cells.

Its function is as follows. Involved in oxygen transport from the lung to the various peripheral tissues. This chain is Hemoglobin subunit alpha-D (HBAD), found in Sphenodon punctatus (Tuatara).